The following is a 494-amino-acid chain: Probable malate:quinone oxidoreductase 3 (494 aa).

This sequence belongs to the MQO family. FAD serves as cofactor.

The catalysed reaction is (S)-malate + a quinone = a quinol + oxaloacetate. It functions in the pathway carbohydrate metabolism; tricarboxylic acid cycle; oxaloacetate from (S)-malate (quinone route): step 1/1. This Staphylococcus epidermidis (strain ATCC 12228 / FDA PCI 1200) protein is Probable malate:quinone oxidoreductase 3.